We begin with the raw amino-acid sequence, 1896 residues long: Plexin-A1 (1896 aa).

Residues 1 to 26 form the signal peptide; that stretch reads MPLPPRSLQVLLLLLLLLLLLPGMWA. In terms of domain architecture, Sema spans 27–512; sequence EAGLPRAGGG…TEKQVTRVPV (486 aa). Residues 27-1244 lie on the Extracellular side of the membrane; that stretch reads EAGLPRAGGG…VYSDSLLTLP (1218 aa). A glycan (N-linked (GlcNAc...) asparagine) is linked at Asn77. 10 cysteine pairs are disulfide-bonded: Cys95–Cys104, Cys130–Cys138, Cys286–Cys407, Cys302–Cys358, Cys376–Cys395, Cys515–Cys532, Cys521–Cys563, Cys524–Cys541, Cys535–Cys547, and Cys598–Cys617. N-linked (GlcNAc...) asparagine glycans are attached at residues Asn660, Asn672, and Asn701. IPT/TIG domains lie at 864-959, 961-1045, 1048-1147, and 1150-1236; these read PKIL…FTFV, PTFY…YNYT, PTIL…FLYY, and PVLE…LQVY. Asn1043 carries an N-linked (GlcNAc...) asparagine glycan. N-linked (GlcNAc...) asparagine glycans are attached at residues Asn1187 and Asn1212. Residues 1245-1265 form a helical membrane-spanning segment; that stretch reads AIVGIGGGGGLLLLVIVAVLI. Positions 1264–1317 form a coiled coil; it reads LIAYKRKSRDADRTLKRLQLQMDNLESRVALECKEAFAELQTDIHELTNDLDGA. At 1266–1896 the chain is on the cytoplasmic side; the sequence is AYKRKSRDAD…QVVDTMALSS (631 aa).

Belongs to the plexin family. In terms of assembly, interacts directly with NRP1 and NRP2. Interacts with PLXN1B. Interacts with FARP2, RND1 and KDR/VEGFR2. Binding of SEMA3A leads to dissociation of FARP2. Interacts with CRMP1, DPYSL2/CRMP2, DPYSL3/CRMP3 and DPYSL4/CRMP4. Interacts (via TIG domains) with TREM2; the interaction mediates SEMA6D binding and signaling through TYROBP. As to expression, detected in fetal brain, lung, liver and kidney.

The protein localises to the cell membrane. Coreceptor for SEMA3A, SEMA3C, SEMA3F and SEMA6D. Necessary for signaling by class 3 semaphorins and subsequent remodeling of the cytoskeleton. Plays a role in axon guidance, invasive growth and cell migration. Class 3 semaphorins bind to a complex composed of a neuropilin and a plexin. The plexin modulates the affinity of the complex for specific semaphorins, and its cytoplasmic domain is required for the activation of down-stream signaling events in the cytoplasm. Acts as coreceptor of TREM2 for SEMA6D in dendritic cells and is involved in the generation of immune responses and skeletal homeostasis. This Homo sapiens (Human) protein is Plexin-A1.